A 716-amino-acid chain; its full sequence is Epidermal growth factor receptor kinase substrate 8-like protein 1 (716 aa).

Positions Gln-35–Glu-164 constitute a PTB domain. 5 disordered regions span residues Glu-175–Pro-194, Val-203–Leu-249, Pro-404–Ser-472, Tyr-528–Pro-582, and Ser-600–Glu-628. Ser-182 carries the post-translational modification Phosphoserine. The residue at position 187 (Thr-187) is a Phosphothreonine. The span at Pro-435–His-446 shows a compositional bias: basic and acidic residues. Residues Gln-453–Gln-464 show a composition bias toward polar residues. One can recognise an SH3 domain in the interval Lys-477 to Gly-536. Residues Thr-553–Ala-563 are compositionally biased toward pro residues. Positions Val-682–Thr-713 form a coiled coil.

This sequence belongs to the EPS8 family. As to quaternary structure, interacts with ABI1. Part of a complex that contains SOS1, ABI1 and EPS8L2. Associates with F-actin. Detected in placenta, skin, mammary gland, bone marrow and stomach.

It is found in the cytoplasm. In terms of biological role, stimulates guanine exchange activity of SOS1. May play a role in membrane ruffling and remodeling of the actin cytoskeleton. The polypeptide is Epidermal growth factor receptor kinase substrate 8-like protein 1 (Eps8l1) (Mus musculus (Mouse)).